A 273-amino-acid polypeptide reads, in one-letter code: Tryptophan synthase alpha chain (273 aa).

Residues Glu-49 and Asp-60 each act as proton acceptor in the active site.

This sequence belongs to the TrpA family. As to quaternary structure, tetramer of two alpha and two beta chains.

It carries out the reaction (1S,2R)-1-C-(indol-3-yl)glycerol 3-phosphate + L-serine = D-glyceraldehyde 3-phosphate + L-tryptophan + H2O. Its pathway is amino-acid biosynthesis; L-tryptophan biosynthesis; L-tryptophan from chorismate: step 5/5. Its function is as follows. The alpha subunit is responsible for the aldol cleavage of indoleglycerol phosphate to indole and glyceraldehyde 3-phosphate. The chain is Tryptophan synthase alpha chain from Thiobacillus denitrificans (strain ATCC 25259 / T1).